The sequence spans 294 residues: S-methyl-5'-thioadenosine phosphorylase (294 aa).

Residues Ser-16, 58–59, and 91–92 contribute to the phosphate site; these read RH and SA. Met-189 contributes to the substrate binding site. A phosphate-binding site is contributed by Thr-190. 213 to 215 contacts substrate; sequence DFD.

This sequence belongs to the PNP/MTAP phosphorylase family. MTAP subfamily. As to quaternary structure, homohexamer. Dimer of a homotrimer.

The enzyme catalyses S-methyl-5'-thioadenosine + phosphate = 5-(methylsulfanyl)-alpha-D-ribose 1-phosphate + adenine. It catalyses the reaction 5'-deoxyadenosine + phosphate = 5-deoxy-alpha-D-ribose 1-phosphate + adenine. The protein operates within amino-acid biosynthesis; L-methionine biosynthesis via salvage pathway; S-methyl-5-thio-alpha-D-ribose 1-phosphate from S-methyl-5'-thioadenosine (phosphorylase route): step 1/1. Catalyzes the reversible phosphorylation of S-methyl-5'-thioadenosine (MTA) to adenine and 5-methylthioribose-1-phosphate. Involved in the breakdown of MTA, a major by-product of polyamine biosynthesis. Responsible for the first step in the methionine salvage pathway after MTA has been generated from S-adenosylmethionine. Has broad substrate specificity with 6-aminopurine nucleosides as preferred substrates. Also catalyzes the phosphorylation of 5'-deoxyadenosine (5'dAdo) to 5-deoxyribose 1-phosphate. Part of a bifunctional DHAP-shunt salvage pathway for SAM by-products. This is S-methyl-5'-thioadenosine phosphorylase from Rhodospirillum rubrum (strain ATCC 11170 / ATH 1.1.1 / DSM 467 / LMG 4362 / NCIMB 8255 / S1).